The primary structure comprises 413 residues: Cardiolipin synthase B (413 aa).

PLD phosphodiesterase domains are found at residues 108-135 (IFRR…SAEH) and 285-312 (RRRP…DPLS). Residues His-113, Lys-115, Asp-120, His-290, Lys-292, and Asp-297 contribute to the active site. Positions 388 to 413 (AQVPPPAQPEMETQDRVDPENSGVKP) are disordered.

Belongs to the phospholipase D family. Cardiolipin synthase subfamily. ClsB sub-subfamily.

The protein localises to the cell membrane. The catalysed reaction is 2 a 1,2-diacyl-sn-glycero-3-phospho-(1'-sn-glycerol) = a cardiolipin + glycerol. Its function is as follows. Catalyzes the phosphatidyl group transfer from one phosphatidylglycerol molecule to another to form cardiolipin (CL) (diphosphatidylglycerol) and glycerol. In Salmonella typhi, this protein is Cardiolipin synthase B.